The chain runs to 528 residues: Calcium-dependent protein kinase 13 (528 aa).

Residue Gly2 is the site of N-myristoyl glycine attachment. The span at Lys17 to Gly32 shows a compositional bias: basic and acidic residues. Positions Lys17–Ala37 are disordered. Position 43 is a phosphoserine (Ser43). One can recognise a Protein kinase domain in the interval Tyr54–Ile312. ATP-binding positions include Leu60–Thr68 and Lys83. Catalysis depends on Asp178, which acts as the Proton acceptor. Residue Ser218 is modified to Phosphoserine. The segment at Ala318–Ile348 is autoinhibitory domain. EF-hand domains lie at Glu355–Gln390, Leu391–Val426, Ala427–Asp462, and Asp463–Trp498. 16 residues coordinate Ca(2+): Asp368, Asp370, Asp372, Glu379, Asp404, Thr410, Glu415, Asp440, Asp442, Asn444, Tyr446, Glu451, Asp476, Asp478, Asp480, and Arg482. Residue Ser484 is modified to Phosphoserine. Glu487 is a Ca(2+) binding site. Ser522 carries the post-translational modification Phosphoserine.

The protein belongs to the protein kinase superfamily. Ser/Thr protein kinase family. CDPK subfamily.

The protein localises to the cell membrane. The catalysed reaction is L-seryl-[protein] + ATP = O-phospho-L-seryl-[protein] + ADP + H(+). It carries out the reaction L-threonyl-[protein] + ATP = O-phospho-L-threonyl-[protein] + ADP + H(+). With respect to regulation, activated by calcium. Autophosphorylation may play an important role in the regulation of the kinase activity. May play a role in signal transduction pathways that involve calcium as a second messenger. This chain is Calcium-dependent protein kinase 13 (CPK13), found in Arabidopsis thaliana (Mouse-ear cress).